The sequence spans 377 residues: Floricaula/leafy homolog (377 aa).

Basic and acidic residues predominate over residues 116-126 (RRRLDEEDPRR). The disordered stretch occupies residues 116-190 (RRRLDEEDPR…RKKGQRKVVD (75 aa)). Residues 131 to 141 (SGDNNTNTLDA) are compositionally biased toward polar residues. DNA-binding regions lie at residues 206-210 (REHPF), 275-282 (NKPKMRHY), and 346-349 (YVPT).

It belongs to the FLO/LFY family. As to expression, in developing inflorescences, leaf primordia and very young leaves.

The protein localises to the nucleus. In terms of biological role, probable transcription factor. The polypeptide is Floricaula/leafy homolog (FL) (Populus trichocarpa (Western balsam poplar)).